A 524-amino-acid chain; its full sequence is 2-isopropylmalate synthase (524 aa).

In terms of domain architecture, Pyruvate carboxyltransferase spans 5 to 267 (VIIFDTTLRD…HTNIRHSEIH (263 aa)). The Mn(2+) site is built by D14, H202, H204, and N238. A regulatory domain region spans residues 392–524 (KLEYLGVQSG…KTDKINTESV (133 aa)).

This sequence belongs to the alpha-IPM synthase/homocitrate synthase family. LeuA type 1 subfamily. As to quaternary structure, homodimer. It depends on Mn(2+) as a cofactor.

Its subcellular location is the cytoplasm. It carries out the reaction 3-methyl-2-oxobutanoate + acetyl-CoA + H2O = (2S)-2-isopropylmalate + CoA + H(+). The protein operates within amino-acid biosynthesis; L-leucine biosynthesis; L-leucine from 3-methyl-2-oxobutanoate: step 1/4. Functionally, catalyzes the condensation of the acetyl group of acetyl-CoA with 3-methyl-2-oxobutanoate (2-ketoisovalerate) to form 3-carboxy-3-hydroxy-4-methylpentanoate (2-isopropylmalate). The chain is 2-isopropylmalate synthase from Aeromonas hydrophila subsp. hydrophila (strain ATCC 7966 / DSM 30187 / BCRC 13018 / CCUG 14551 / JCM 1027 / KCTC 2358 / NCIMB 9240 / NCTC 8049).